The chain runs to 166 residues: Large ribosomal subunit protein uL10 (166 aa).

The protein belongs to the universal ribosomal protein uL10 family. As to quaternary structure, part of the ribosomal stalk of the 50S ribosomal subunit. The N-terminus interacts with L11 and the large rRNA to form the base of the stalk. The C-terminus forms an elongated spine to which L12 dimers bind in a sequential fashion forming a multimeric L10(L12)X complex.

Its function is as follows. Forms part of the ribosomal stalk, playing a central role in the interaction of the ribosome with GTP-bound translation factors. The polypeptide is Large ribosomal subunit protein uL10 (Pseudomonas putida (strain W619)).